A 210-amino-acid polypeptide reads, in one-letter code: Large ribosomal subunit protein mL57 (210 aa).

Residues 1–59 constitute a mitochondrion transit peptide; that stretch reads MLTRHCNRLGLQIENKFVFRSSSWNCVRRIGKIACNENKYRYEMTSTEEDIDSFFSRVF.

This sequence belongs to the ribonuclease III family. Mitochondrion-specific ribosomal protein mL57 subfamily. In terms of assembly, component of the mitochondrial large ribosomal subunit (mt-LSU). Mature yeast 74S mitochondrial ribosomes consist of a small (37S) and a large (54S) subunit. The 37S small subunit contains a 15S ribosomal RNA (15S mt-rRNA) and at least 32 different proteins. The 54S large subunit contains a 21S rRNA (21S mt-rRNA) and at least 45 different proteins. mL57 forms a heterodimer with mL44 and stabilizes rRNA expansion segments 1/2 at a membrane-facing protuberance close to the point of attachment of the ribosome to the translocon in the membrane.

Its subcellular location is the mitochondrion. Component of the mitochondrial ribosome (mitoribosome), a dedicated translation machinery responsible for the synthesis of mitochondrial genome-encoded proteins, including at least some of the essential transmembrane subunits of the mitochondrial respiratory chain. The mitoribosomes are attached to the mitochondrial inner membrane and translation products are cotranslationally integrated into the membrane. This chain is Large ribosomal subunit protein mL57 (mrp15), found in Schizosaccharomyces pombe (strain 972 / ATCC 24843) (Fission yeast).